The primary structure comprises 174 residues: Putative serine protease 46 (174 aa).

Residues 43–174 (VVKGKLVEVG…IGWGTTGKKG (132 aa)) enclose the Peptidase S1 domain. A disulfide bridge connects residues cysteine 68 and cysteine 84. Catalysis depends on charge relay system residues histidine 83 and aspartate 128.

The protein belongs to the peptidase S1 family.

The polypeptide is Putative serine protease 46 (Homo sapiens (Human)).